The primary structure comprises 154 residues: 3-hydroxyacyl-[acyl-carrier-protein] dehydratase FabZ (154 aa).

H54 is an active-site residue.

This sequence belongs to the thioester dehydratase family. FabZ subfamily.

The protein localises to the cytoplasm. The enzyme catalyses a (3R)-hydroxyacyl-[ACP] = a (2E)-enoyl-[ACP] + H2O. In terms of biological role, involved in unsaturated fatty acids biosynthesis. Catalyzes the dehydration of short chain beta-hydroxyacyl-ACPs and long chain saturated and unsaturated beta-hydroxyacyl-ACPs. In Shewanella sp. (strain MR-4), this protein is 3-hydroxyacyl-[acyl-carrier-protein] dehydratase FabZ.